The primary structure comprises 158 residues: SsrA-binding protein (158 aa).

The disordered stretch occupies residues 134 to 158; it reads KLHDKRETEKERDWNRQKSRLLKTG. Residues 137–149 are compositionally biased toward basic and acidic residues; sequence DKRETEKERDWNR.

Belongs to the SmpB family.

The protein localises to the cytoplasm. Its function is as follows. Required for rescue of stalled ribosomes mediated by trans-translation. Binds to transfer-messenger RNA (tmRNA), required for stable association of tmRNA with ribosomes. tmRNA and SmpB together mimic tRNA shape, replacing the anticodon stem-loop with SmpB. tmRNA is encoded by the ssrA gene; the 2 termini fold to resemble tRNA(Ala) and it encodes a 'tag peptide', a short internal open reading frame. During trans-translation Ala-aminoacylated tmRNA acts like a tRNA, entering the A-site of stalled ribosomes, displacing the stalled mRNA. The ribosome then switches to translate the ORF on the tmRNA; the nascent peptide is terminated with the 'tag peptide' encoded by the tmRNA and targeted for degradation. The ribosome is freed to recommence translation, which seems to be the essential function of trans-translation. The chain is SsrA-binding protein from Allorhizobium ampelinum (strain ATCC BAA-846 / DSM 112012 / S4) (Agrobacterium vitis (strain S4)).